The chain runs to 309 residues: Dihydroorotate dehydrogenase B (NAD(+)), catalytic subunit (309 aa).

Residues Ser-21 and 45 to 46 (KA) contribute to the FMN site. Substrate is bound by residues Lys-45 and 69–73 (NAIGL). FMN is bound by residues Asn-99 and Asn-127. Asn-127 contacts substrate. Residue Cys-130 is the Nucleophile of the active site. Residues Lys-165 and Ile-191 each contribute to the FMN site. 192–193 (NT) contributes to the substrate binding site. Residues Gly-217, 243–244 (GG), and 265–266 (GT) each bind FMN.

This sequence belongs to the dihydroorotate dehydrogenase family. Type 1 subfamily. Heterotetramer of 2 PyrK and 2 PyrD type B subunits. Requires FMN as cofactor.

It localises to the cytoplasm. The catalysed reaction is (S)-dihydroorotate + NAD(+) = orotate + NADH + H(+). Its pathway is pyrimidine metabolism; UMP biosynthesis via de novo pathway; orotate from (S)-dihydroorotate (NAD(+) route): step 1/1. Catalyzes the conversion of dihydroorotate to orotate with NAD(+) as electron acceptor. The protein is Dihydroorotate dehydrogenase B (NAD(+)), catalytic subunit (pyrD) of Bacillus thuringiensis (strain Al Hakam).